Here is a 308-residue protein sequence, read N- to C-terminus: Regulating synaptic membrane exocytosis protein 3 (308 aa).

The tract at residues 86-120 (STETGIAVEMRSRVTRQGSRESTDGSTNSNSSDGT) is disordered. Residues 109-120 (DGSTNSNSSDGT) show a composition bias toward low complexity. The C2 domain occupies 156–274 (PMGDVHIAIM…DLSAAVTGWY (119 aa)). A phosphoserine mark is found at S295 and S298.

In terms of assembly, binds PPFIA3. Does not bind RAB3.

Its subcellular location is the synapse. Its function is as follows. Regulates synaptic membrane exocytosis. This chain is Regulating synaptic membrane exocytosis protein 3 (RIMS3), found in Homo sapiens (Human).